The following is an 880-amino-acid chain: Leucine--tRNA ligase (880 aa).

A 'HIGH' region motif is present at residues 46–56 (PYPSGALHMGH). The 'KMSKS' region motif lies at 638–642 (KMSKS). An ATP-binding site is contributed by Lys641.

It belongs to the class-I aminoacyl-tRNA synthetase family.

It localises to the cytoplasm. It catalyses the reaction tRNA(Leu) + L-leucine + ATP = L-leucyl-tRNA(Leu) + AMP + diphosphate. This Stenotrophomonas maltophilia (strain K279a) protein is Leucine--tRNA ligase.